A 473-amino-acid polypeptide reads, in one-letter code: 3-isopropylmalate dehydratase large subunit 2 (473 aa).

Residues C350, C410, and C413 each contribute to the [4Fe-4S] cluster site.

Belongs to the aconitase/IPM isomerase family. LeuC type 1 subfamily. As to quaternary structure, heterodimer of LeuC and LeuD. It depends on [4Fe-4S] cluster as a cofactor.

The catalysed reaction is (2R,3S)-3-isopropylmalate = (2S)-2-isopropylmalate. It participates in amino-acid biosynthesis; L-leucine biosynthesis; L-leucine from 3-methyl-2-oxobutanoate: step 2/4. Functionally, catalyzes the isomerization between 2-isopropylmalate and 3-isopropylmalate, via the formation of 2-isopropylmaleate. The chain is 3-isopropylmalate dehydratase large subunit 2 from Salmonella choleraesuis (strain SC-B67).